The chain runs to 232 residues: Putative homeobox protein NANOG2 (232 aa).

The tract at residues 1–39 (MDLPIQDSHDSSTSPKGKQPTTAEKSATKKEDKVPVKKQ) is disordered. Over residues 11 to 25 (SSTSPKGKQPTTAEK) the composition is skewed to polar residues. The span at 26–35 (SATKKEDKVP) shows a compositional bias: basic and acidic residues. 8 tandem repeats follow at residues 123–127 (WSNQT), 128–132 (WNNST), 133–137 (WSNQT), 143–147 (WSNHS), 148–152 (WNTQT), 153–157 (WCTQS), 158–162 (WNNQA), and 163–167 (WNSPF). The 8 X repeats starting with a Trp in each unit stretch occupies residues 123–167 (WSNQTWNNSTWSNQTQNIQSWSNHSWNTQTWCTQSWNNQAWNSPF). Residues 123-167 (WSNQTWNNSTWSNQTQNIQSWSNHSWNTQTWCTQSWNNQAWNSPF) form a sufficient for transactivation activity region. Residues 168–232 (YNCGEESLQS…YSMNMQPEDV (65 aa)) are sufficient for strong transactivation activity.

Belongs to the Nanog homeobox family.

It is found in the nucleus. Functionally, probable transcriptional regulator. This chain is Putative homeobox protein NANOG2 (NANOGP1), found in Homo sapiens (Human).